The sequence spans 353 residues: (S)-8-amino-7-oxononanoate synthase BioU (353 aa).

Residue 10 to 14 participates in NAD(+) binding; sequence GTGGI. The Nucleophile role is filled by Lys147. Allysine is present on Lys147. 214 to 215 is an NAD(+) binding site; sequence GT. Glu218 (proton acceptor) is an active-site residue. His222 functions as the Proton donor and proton acceptor in the catalytic mechanism.

The protein belongs to the BioU family. Monomer.

It carries out the reaction (8S)-8-amino-7-oxononanoate + L-lysyl-[protein] + CO2 = (S)-2-amino-6-oxohexanoyl-[protein] + (7R,8S)-8-amino-7-(carboxyamino)nonanoate + 2 H(+). The catalysed reaction is (8S)-8-amino-7-oxononanoate + L-lysyl-[protein] + NADPH + H(+) = N(6)-[(2S,3R)-2-amino-8-carboxyoctan-3-yl]-L-lysyl-[protein] + NADP(+) + H2O. It catalyses the reaction N(6)-[(2S,3R)-2-amino-8-carboxyoctan-3-yl]-L-lysyl-[protein] + CO2 + NADP(+) + H2O = (S)-2-amino-6-oxohexanoyl-[protein] + (7R,8S)-8-amino-7-(carboxyamino)nonanoate + NADPH + 3 H(+). The enzyme catalyses (8S)-8-amino-7-oxononanoate + L-lysyl-[protein] + NADH + H(+) = N(6)-[(2S,3R)-2-amino-8-carboxyoctan-3-yl]-L-lysyl-[protein] + NAD(+) + H2O. It carries out the reaction N(6)-[(2S,3R)-2-amino-8-carboxyoctan-3-yl]-L-lysyl-[protein] + CO2 + NAD(+) + H2O = (S)-2-amino-6-oxohexanoyl-[protein] + (7R,8S)-8-amino-7-(carboxyamino)nonanoate + NADH + 3 H(+). Its pathway is cofactor biosynthesis; biotin biosynthesis. In terms of biological role, a 'suicide' enzyme that participates in biotin synthesis. Catalyzes the formation of (S)-8-amino-7-oxononanoate (DAN-carbamic acid) from (7R,8S)-8-amino-7-(carboxyamino)nonanoate (DAN), a function equivalent to the cannonical BioA reaction and the first half-reaction of BioD. The cellular requirement for biotin is thought be low enough that this single turnover enzyme supplies a sufficient amount of the cofactor. Overall it catalyzes three reactions: formation of a covalent linkage with 8-amino-7-oxononanoate to yield a BioU-DAN conjugate at the epsilon-amino group of Lys124 of BioU using NAD(P)H, carboxylation of the conjugate to form BioU-DAN-carbamic acid, and release of DAN-carbamic acid using NAD(P)+. Complements a bioA deletion in E.coli. This is (S)-8-amino-7-oxononanoate synthase BioU from Haloferax mediterranei (strain ATCC 33500 / DSM 1411 / JCM 8866 / NBRC 14739 / NCIMB 2177 / R-4) (Halobacterium mediterranei).